A 148-amino-acid polypeptide reads, in one-letter code: Large ribosomal subunit protein bL9 (148 aa).

This sequence belongs to the bacterial ribosomal protein bL9 family.

In terms of biological role, binds to the 23S rRNA. This is Large ribosomal subunit protein bL9 from Chromohalobacter salexigens (strain ATCC BAA-138 / DSM 3043 / CIP 106854 / NCIMB 13768 / 1H11).